The following is a 255-amino-acid chain: Thiazole synthase (255 aa).

Lys-96 acts as the Schiff-base intermediate with DXP in catalysis. 1-deoxy-D-xylulose 5-phosphate contacts are provided by residues Gly-157, 183–184, and 205–206; these read AG and NT.

The protein belongs to the ThiG family. Homotetramer. Forms heterodimers with either ThiH or ThiS.

The protein localises to the cytoplasm. It catalyses the reaction [ThiS sulfur-carrier protein]-C-terminal-Gly-aminoethanethioate + 2-iminoacetate + 1-deoxy-D-xylulose 5-phosphate = [ThiS sulfur-carrier protein]-C-terminal Gly-Gly + 2-[(2R,5Z)-2-carboxy-4-methylthiazol-5(2H)-ylidene]ethyl phosphate + 2 H2O + H(+). It participates in cofactor biosynthesis; thiamine diphosphate biosynthesis. Its function is as follows. Catalyzes the rearrangement of 1-deoxy-D-xylulose 5-phosphate (DXP) to produce the thiazole phosphate moiety of thiamine. Sulfur is provided by the thiocarboxylate moiety of the carrier protein ThiS. In vitro, sulfur can be provided by H(2)S. This chain is Thiazole synthase, found in Staphylococcus epidermidis (strain ATCC 35984 / DSM 28319 / BCRC 17069 / CCUG 31568 / BM 3577 / RP62A).